Reading from the N-terminus, the 127-residue chain is MSNIPADLKYVASHEWVRDEGDGVVTVGVTFHAQELLGDIVYIELPAVGQVLAEGDGAGVVESVKAASDVYAPIAGEVLEVNADLESAPETVNADPYGAGWFFKLKLVNPADMASLLDAAAYEKEVG.

Residues 24–106 (VVTVGVTFHA…YGAGWFFKLK (83 aa)) enclose the Lipoyl-binding domain. An N6-lipoyllysine modification is found at K65.

This sequence belongs to the GcvH family. In terms of assembly, the glycine cleavage system is composed of four proteins: P, T, L and H. It depends on (R)-lipoate as a cofactor.

In terms of biological role, the glycine cleavage system catalyzes the degradation of glycine. The H protein shuttles the methylamine group of glycine from the P protein to the T protein. This Laribacter hongkongensis (strain HLHK9) protein is Glycine cleavage system H protein.